The following is a 152-amino-acid chain: UPF0225 protein YchJ (152 aa).

This sequence belongs to the UPF0225 family.

This is UPF0225 protein YchJ from Escherichia coli O139:H28 (strain E24377A / ETEC).